We begin with the raw amino-acid sequence, 541 residues long: Pheromone B beta 1 receptor (541 aa).

Residues 1–3 (MHP) are Extracellular-facing. A helical transmembrane segment spans residues 4-24 (EFAPVAFLSAASLALPLPWHW). At 25-33 (RAGNVATLS) the chain is on the cytoplasmic side. The helical transmembrane segment at 34 to 54 (IIAWLFIMNMIYGINAVIWAG) threads the bilayer. Residues 55-69 (SARITAVVYCDITTK) are Extracellular-facing. A helical membrane pass occupies residues 70 to 90 (LTIGGNFALPAACLCLCIHLE). Residues 91–109 (RVASVRAAQTTAADKRRRT) lie on the Cytoplasmic side of the membrane. A helical membrane pass occupies residues 110–130 (IFELAMCWLLPIIFMALHYVV). Topologically, residues 131–150 (QGHRFDIVEDFGCRPATYYS) are extracellular. The chain crosses the membrane as a helical span at residues 151–171 (IPAIFIVWVPPLTMAAASLVY). The Cytoplasmic portion of the chain corresponds to 172 to 205 (ASLAIRHFMHRRLSFAMHLQARSSALTTSRYLRL). A helical membrane pass occupies residues 206-226 (ILMAIVQLVWLVVTTAYTLWF). Residues 227 to 264 (SSMTLNLRPWTTWADVHSNFGRIQTWPAIITPAVILRG) are Extracellular-facing. The helical transmembrane segment at 265 to 285 (ACTLWWMVPASTWIFVAFFAF) threads the bilayer. Topologically, residues 286–541 (GNDAVEEYKR…IASVFPGGRR (256 aa)) are cytoplasmic. 2 disordered regions span residues 364-393 (TTST…PLDS) and 414-541 (YTIE…GGRR). Pro residues predominate over residues 372 to 385 (MPPPYSLPPPPPPQ). Positions 420–429 (PETPSTSSST) are enriched in low complexity. Composition is skewed to pro residues over residues 467-478 (IPAPPSLPPPTH) and 493-502 (SRPPAFPPYP).

Belongs to the G-protein coupled receptor 4 family.

Its subcellular location is the membrane. Receptor for the BBP1 pheromone, a prenylated mating factor. The polypeptide is Pheromone B beta 1 receptor (BBR1) (Schizophyllum commune (Split gill fungus)).